We begin with the raw amino-acid sequence, 252 residues long: Triosephosphate isomerase (252 aa).

10-12 (NWK) serves as a coordination point for substrate. The Electrophile role is filled by H96. E168 functions as the Proton acceptor in the catalytic mechanism. Residues G174, S214, and 235-236 (GG) each bind substrate.

It belongs to the triosephosphate isomerase family. As to quaternary structure, homodimer.

It is found in the cytoplasm. The catalysed reaction is D-glyceraldehyde 3-phosphate = dihydroxyacetone phosphate. Its pathway is carbohydrate biosynthesis; gluconeogenesis. The protein operates within carbohydrate degradation; glycolysis; D-glyceraldehyde 3-phosphate from glycerone phosphate: step 1/1. Involved in the gluconeogenesis. Catalyzes stereospecifically the conversion of dihydroxyacetone phosphate (DHAP) to D-glyceraldehyde-3-phosphate (G3P). This Lactococcus lactis subsp. lactis (strain IL1403) (Streptococcus lactis) protein is Triosephosphate isomerase.